The primary structure comprises 167 residues: UPF0598 protein CG30010 (167 aa).

The protein belongs to the UPF0598 family.

The sequence is that of UPF0598 protein CG30010 from Drosophila melanogaster (Fruit fly).